The sequence spans 71 residues: DNA-directed RNA polymerase subunit omega (71 aa).

This sequence belongs to the RNA polymerase subunit omega family. As to quaternary structure, the RNAP catalytic core consists of 2 alpha, 1 beta, 1 beta' and 1 omega subunit. When a sigma factor is associated with the core the holoenzyme is formed, which can initiate transcription.

It carries out the reaction RNA(n) + a ribonucleoside 5'-triphosphate = RNA(n+1) + diphosphate. Promotes RNA polymerase assembly. Latches the N- and C-terminal regions of the beta' subunit thereby facilitating its interaction with the beta and alpha subunits. The sequence is that of DNA-directed RNA polymerase subunit omega from Syntrophomonas wolfei subsp. wolfei (strain DSM 2245B / Goettingen).